Consider the following 340-residue polypeptide: Phospho-N-acetylmuramoyl-pentapeptide-transferase (340 aa).

9 consecutive transmembrane segments (helical) span residues 22–42, 69–89, 95–115, 129–149, 156–176, 186–206, 209–229, 235–257, and 316–336; these read VVVP…LLIP, TMGG…WSGW, AVAL…WLVI, LLLQ…QGIP, GIGT…VLVG, GMDG…GLLH, PELS…LVHN, LFMG…LLGD, and VVGS…AWWH.

Belongs to the glycosyltransferase 4 family. MraY subfamily. Mg(2+) serves as cofactor.

It localises to the cell inner membrane. It carries out the reaction UDP-N-acetyl-alpha-D-muramoyl-L-alanyl-gamma-D-glutamyl-meso-2,6-diaminopimeloyl-D-alanyl-D-alanine + di-trans,octa-cis-undecaprenyl phosphate = di-trans,octa-cis-undecaprenyl diphospho-N-acetyl-alpha-D-muramoyl-L-alanyl-D-glutamyl-meso-2,6-diaminopimeloyl-D-alanyl-D-alanine + UMP. The protein operates within cell wall biogenesis; peptidoglycan biosynthesis. Catalyzes the initial step of the lipid cycle reactions in the biosynthesis of the cell wall peptidoglycan: transfers peptidoglycan precursor phospho-MurNAc-pentapeptide from UDP-MurNAc-pentapeptide onto the lipid carrier undecaprenyl phosphate, yielding undecaprenyl-pyrophosphoryl-MurNAc-pentapeptide, known as lipid I. The chain is Phospho-N-acetylmuramoyl-pentapeptide-transferase from Synechococcus sp. (strain JA-2-3B'a(2-13)) (Cyanobacteria bacterium Yellowstone B-Prime).